We begin with the raw amino-acid sequence, 729 residues long: Catalase-peroxidase (729 aa).

A disordered region spans residues 1 to 33; that stretch reads MSAHNTNESAVGKCPFHEQKEEKSVLARGAGGG. Basic and acidic residues predominate over residues 15–25; the sequence is PFHEQKEEKSV. The segment at residues 108 to 229 is a cross-link (tryptophyl-tyrosyl-methioninium (Trp-Tyr) (with M-255)); that stretch reads WHSAGTYRTV…LGATEMGLIY (122 aa). The active-site Proton acceptor is the histidine 109. Positions 229 to 255 form a cross-link, tryptophyl-tyrosyl-methioninium (Tyr-Met) (with W-108); the sequence is YVNPEGPEASGNPASAAPAIRATFGNM. A heme b-binding site is contributed by histidine 270.

This sequence belongs to the peroxidase family. Peroxidase/catalase subfamily. As to quaternary structure, homodimer or homotetramer. Heme b serves as cofactor. In terms of processing, formation of the three residue Trp-Tyr-Met cross-link is important for the catalase, but not the peroxidase activity of the enzyme.

It carries out the reaction H2O2 + AH2 = A + 2 H2O. The enzyme catalyses 2 H2O2 = O2 + 2 H2O. In terms of biological role, bifunctional enzyme with both catalase and broad-spectrum peroxidase activity. The polypeptide is Catalase-peroxidase (Erwinia tasmaniensis (strain DSM 17950 / CFBP 7177 / CIP 109463 / NCPPB 4357 / Et1/99)).